We begin with the raw amino-acid sequence, 465 residues long: E3 ubiquitin-protein ligase ORTHRUS-LIKE 1 (465 aa).

Residues 31-69 (TSLSSPLDRSGDVDPLPVSDESGGSKADESMTDADETKK) form a disordered region. The RING-type zinc finger occupies 109–148 (CSLCNQLPDRPVTILCGHNFCLKCFDKWIDQGNQICATCR). The region spanning 233–374 (VRNQGVLVGE…FKVCRYLFVR (142 aa)) is the YDG domain. Residues 442–462 (MAMTCLLLFVLIILVGSSSIL) traverse the membrane as a helical segment.

It is found in the nucleus. Its subcellular location is the membrane. The catalysed reaction is S-ubiquitinyl-[E2 ubiquitin-conjugating enzyme]-L-cysteine + [acceptor protein]-L-lysine = [E2 ubiquitin-conjugating enzyme]-L-cysteine + N(6)-ubiquitinyl-[acceptor protein]-L-lysine.. It participates in protein modification; protein ubiquitination. Functionally, E3 ubiquitin-protein ligase. May participate in methylation-dependent transcriptional regulation. Mediates ubiquitination with the E2 ubiquitin-conjugating enzyme UBC11. The polypeptide is E3 ubiquitin-protein ligase ORTHRUS-LIKE 1 (ORTHL) (Arabidopsis thaliana (Mouse-ear cress)).